We begin with the raw amino-acid sequence, 488 residues long: MINRQLSRLLLCSILGSTTLISGCALVRKDSAPHQQLKPEQIKLADDIHLASSGWPQAQWWKQLNDPQLDSLIQRTLSGSHPLAEAKLREEKAQSQADLLDAGSQLQVAALGMLNRQRVSANGFLSPYAMDAPALGMDGPYYTEATVGLFAGLDLDLWGVHRSAVAAAIGAHNAALAETAAVELSLTTGVAQLYYSMQASYQMLDLLEQTRDVIDYAVKAHQSKVAHGLEAQVPFHGARAQILAVDKQIAAVKGQITETRESLRALIGAGASDMPEIKPVALPRVQTGIPATLSYELLARRPDLQAMRWYVQASLDQVDSARALFYPSFDIKAFFGLDSIHLDTLFKKTSRQFNFIPGLKLPLFDGGRLNANLEGTRAASNMMIERYNQSVLNAVRDVAVNGTRLQTLNDEREMQAERVEATRFTQRAAEAAYQRGLTSRLQATEARLPVLAEEMSLLMLDSRRVIQSIQLMKSLGGGYQAAPIVEKK.

The signal sequence occupies residues 1–23 (MINRQLSRLLLCSILGSTTLISG). C24 carries the N-palmitoyl cysteine lipid modification. Residue C24 is the site of S-diacylglycerol cysteine attachment.

Belongs to the outer membrane factor (OMF) (TC 1.B.17) family. Could be part of a tripartite efflux system composed of MdtN, MdtO and MdtP.

The protein localises to the cell outer membrane. In terms of biological role, could be involved in resistance to puromycin, acriflavine and tetraphenylarsonium chloride. This chain is Multidrug resistance outer membrane protein MdtP (mdtP), found in Escherichia coli O6:H1 (strain CFT073 / ATCC 700928 / UPEC).